The sequence spans 72 residues: Bradykinin-potentiating peptide BmKbpp (72 aa).

Positions 1–22 are cleaved as a signal peptide; it reads MNKKTLLVIFFVTMLIVDEVNS. Positions 70–72 are excised as a propeptide; sequence RRR.

This sequence belongs to the non-disulfide-bridged peptide (NDBP) superfamily. Long chain multifunctional peptide (group 2) family. Expressed by the venom gland.

It is found in the secreted. In terms of biological role, amphipathic peptide that shows bradykinin potentiating activity and antimicrobial activities against bacteria and fungi. Has higher antibacterial activities against Gram-negative than against Gram-positive bacteria. Also inhibits NADPH oxidase-dependent superoxide production (IC(50) is 0.4 uM on granulocytes stimulated with PMA, IC(50) is 0.51 uM on HL-60 cells undifferentiated and IC(50) is 0.53 uM on HL-60 cells treated with DMSO). The C-terminal peptide shows a higher bradykinin potentiating activity than the complete peptide. This Olivierus martensii (Manchurian scorpion) protein is Bradykinin-potentiating peptide BmKbpp.